The sequence spans 466 residues: Cysteine--tRNA ligase (466 aa).

C29 is a binding site for Zn(2+). Residues 31-41 (ATVQAPPHIGH) carry the 'HIGH' region motif. C211, H236, and E240 together coordinate Zn(2+). Residues 267 to 271 (KMSKS) carry the 'KMSKS' region motif. ATP is bound at residue K270.

This sequence belongs to the class-I aminoacyl-tRNA synthetase family. As to quaternary structure, monomer. It depends on Zn(2+) as a cofactor.

Its subcellular location is the cytoplasm. The catalysed reaction is tRNA(Cys) + L-cysteine + ATP = L-cysteinyl-tRNA(Cys) + AMP + diphosphate. In Thermobifida fusca (strain YX), this protein is Cysteine--tRNA ligase.